Consider the following 581-residue polypeptide: Proline--tRNA ligase (581 aa).

It belongs to the class-II aminoacyl-tRNA synthetase family. ProS type 1 subfamily. In terms of assembly, homodimer.

Its subcellular location is the cytoplasm. It catalyses the reaction tRNA(Pro) + L-proline + ATP = L-prolyl-tRNA(Pro) + AMP + diphosphate. Functionally, catalyzes the attachment of proline to tRNA(Pro) in a two-step reaction: proline is first activated by ATP to form Pro-AMP and then transferred to the acceptor end of tRNA(Pro). As ProRS can inadvertently accommodate and process non-cognate amino acids such as alanine and cysteine, to avoid such errors it has two additional distinct editing activities against alanine. One activity is designated as 'pretransfer' editing and involves the tRNA(Pro)-independent hydrolysis of activated Ala-AMP. The other activity is designated 'posttransfer' editing and involves deacylation of mischarged Ala-tRNA(Pro). The misacylated Cys-tRNA(Pro) is not edited by ProRS. This Verminephrobacter eiseniae (strain EF01-2) protein is Proline--tRNA ligase.